The chain runs to 335 residues: Dihydroorotate dehydrogenase (quinone) (335 aa).

FMN-binding positions include 59–63 (AGLDK) and Thr-83. Position 63 (Lys-63) interacts with substrate. 108–112 (NRMGF) lines the substrate pocket. The FMN site is built by Asn-136 and Asn-169. Residue Asn-169 coordinates substrate. Ser-172 functions as the Nucleophile in the catalytic mechanism. Asn-174 lines the substrate pocket. FMN is bound by residues Lys-214 and Thr-242. Position 243-244 (243-244 (NT)) interacts with substrate. Residues Gly-265, Gly-294, and 315–316 (YS) each bind FMN.

It belongs to the dihydroorotate dehydrogenase family. Type 2 subfamily. Monomer. FMN serves as cofactor.

The protein localises to the cell membrane. It carries out the reaction (S)-dihydroorotate + a quinone = orotate + a quinol. It participates in pyrimidine metabolism; UMP biosynthesis via de novo pathway; orotate from (S)-dihydroorotate (quinone route): step 1/1. Functionally, catalyzes the conversion of dihydroorotate to orotate with quinone as electron acceptor. The sequence is that of Dihydroorotate dehydrogenase (quinone) from Neisseria meningitidis serogroup C / serotype 2a (strain ATCC 700532 / DSM 15464 / FAM18).